We begin with the raw amino-acid sequence, 439 residues long: CBL-interacting serine/threonine-protein kinase 26 (439 aa).

The Protein kinase domain maps to 13–268 (YEVGKTLGQG…IPEVLGDAWF (256 aa)). ATP is bound by residues 19–27 (LGQGTFAKV) and Lys-42. Asp-136 serves as the catalytic Proton acceptor. The tract at residues 154–183 (DFGLSALSRQVRGDGLLHTACGTPNYAAPE) is activation loop. Position 158 is a phosphoserine (Ser-158). Position 172 is a phosphothreonine (Thr-172). The NAF domain maps to 306–330 (EQPTSMNAFELISMSRALDLGNLFE). Positions 336 to 365 (KRETRFAAKGAANDLVQKIEEASKPLGFDI) are PPI.

This sequence belongs to the protein kinase superfamily. CAMK Ser/Thr protein kinase family. SNF1 subfamily. In terms of assembly, interacts with RBOHF (via N-terminus). Mn(2+) is required as a cofactor.

Its subcellular location is the cell membrane. It carries out the reaction L-seryl-[protein] + ATP = O-phospho-L-seryl-[protein] + ADP + H(+). The enzyme catalyses L-threonyl-[protein] + ATP = O-phospho-L-threonyl-[protein] + ADP + H(+). Its function is as follows. CIPK serine-threonine protein kinases interact with CBL proteins. Binding of a CBL protein to the regulatory NAF domain of CIPK protein lead to the activation of the kinase in a calcium-dependent manner. Involved in the calcium-dependent regulation of reactive oxygen species production by the NADPH oxidase RBOHF. The sequence is that of CBL-interacting serine/threonine-protein kinase 26 (CIPK26) from Arabidopsis thaliana (Mouse-ear cress).